A 119-amino-acid chain; its full sequence is Protein MRP-126 (119 aa).

EF-hand domains lie at 23-58 (DVFH…LKHV) and 59-94 (KNQV…VTVA). Residues T37, E42, D72, N74, D76, Q78, and E83 each coordinate Ca(2+).

Belongs to the S-100 family. In terms of tissue distribution, expressed in v-myb-transformed myelomonocytic cells.

The chain is Protein MRP-126 from Gallus gallus (Chicken).